A 2061-amino-acid chain; its full sequence is Putative PWWP domain-containing DNA repair factor 4 (2061 aa).

10 disordered regions span residues 101 to 211 (TNLG…SRAR), 382 to 408 (ALGR…RSSV), 541 to 586 (TPGT…GDGS), 668 to 694 (PATL…GDGS), 864 to 910 (PTPG…SERS), 1046 to 1072 (PGTM…GDRS), 1159 to 1182 (ALHG…RGDS), 1205 to 1383 (KAIA…RDDK), 1521 to 1548 (PGAL…DSSP), and 1602 to 1726 (KKGK…KLAN). Basic and acidic residues-rich tracts occupy residues 133–153 (PRED…KREN) and 162–173 (ESKRALRDDRSQ). Residues 397 to 408 (TPGTLQGNRSSV) show a composition bias toward polar residues. The span at 1051-1061 (GDSSTARTATA) shows a compositional bias: polar residues. Over residues 1364–1373 (DSSQVHTTIA) the composition is skewed to polar residues. Residues 1639–1648 (LKEETQDSRP) are compositionally biased toward basic and acidic residues. Over residues 1656–1665 (PESSPFSGNI) the composition is skewed to polar residues. In terms of domain architecture, PWWP spans 1756 to 1817 (RGTMVWFKFQ…KHLDCKEKEK (62 aa)).

The protein belongs to the PWWP3A family.

The protein is Putative PWWP domain-containing DNA repair factor 4 of Homo sapiens (Human).